The chain runs to 190 residues: Inner membrane-spanning protein YciB (190 aa).

Helical transmembrane passes span 22–42, 50–70, 76–96, 118–138, and 148–168; these read IYVA…LTFA, MQLI…FLHD, WKVT…HAMG, INWA…YVAF, and FKVF…GFYI.

Belongs to the YciB family.

The protein resides in the cell inner membrane. In terms of biological role, plays a role in cell envelope biogenesis, maintenance of cell envelope integrity and membrane homeostasis. The sequence is that of Inner membrane-spanning protein YciB from Vibrio campbellii (strain ATCC BAA-1116).